Reading from the N-terminus, the 316-residue chain is MKILVTGAAGFIGSHLCEELLKDKKHNVIGIDDFIGPTPFSLKLKNLKNLLPEKRFTFIKENLLTADLASLLEGVDVIFHLAAIPGVRSSWGNHFHPYAAHNIQALQRLLEACREHSIQTFVFASTSSVYGEKQGKVSENTSLSPLSPYGVTKLTGEKLCHVYKQSFGIPIVILRFFTVYGPRQRPDMAFHRLIKQHLQQKPLTIFGDGQQSRDFTYISDCVKGITAVLGKPHLIGETVNIGGAERASVLKVVSLIEDISGRKATLHFSDKIAGEPSNTWADISKAKQLLHYDPATSLKDGLTNEIAYLSSLYQGE.

Position 126 (threonine 126) interacts with substrate. Residue tyrosine 149 is the Proton acceptor of the active site.

It belongs to the NAD(P)-dependent epimerase/dehydratase family.

This is an uncharacterized protein from Bacillus subtilis (strain 168).